The sequence spans 60 residues: Small, acid-soluble spore protein H 2 (60 aa).

Positions 38-60 (TIHPLDNPSQKQSVPVASLEEHS) are disordered.

This sequence belongs to the SspH family.

The protein localises to the spore core. In Geobacillus thermodenitrificans (strain NG80-2), this protein is Small, acid-soluble spore protein H 2.